Consider the following 72-residue polypeptide: Translation initiation factor IF-1 (72 aa).

Residues 1-72 form the S1-like domain; that stretch reads MSKEDSFEME…SKGRITYRAR (72 aa).

Belongs to the IF-1 family. Component of the 30S ribosomal translation pre-initiation complex which assembles on the 30S ribosome in the order IF-2 and IF-3, IF-1 and N-formylmethionyl-tRNA(fMet); mRNA recruitment can occur at any time during PIC assembly.

It is found in the cytoplasm. One of the essential components for the initiation of protein synthesis. Stabilizes the binding of IF-2 and IF-3 on the 30S subunit to which N-formylmethionyl-tRNA(fMet) subsequently binds. Helps modulate mRNA selection, yielding the 30S pre-initiation complex (PIC). Upon addition of the 50S ribosomal subunit IF-1, IF-2 and IF-3 are released leaving the mature 70S translation initiation complex. This chain is Translation initiation factor IF-1, found in Pseudomonas syringae pv. tomato (strain ATCC BAA-871 / DC3000).